We begin with the raw amino-acid sequence, 89 residues long: Large ribosomal subunit protein bL27 (89 aa).

Residues 1 to 20 (MAHKKAGGSSRNGRDSESKR) are disordered.

This sequence belongs to the bacterial ribosomal protein bL27 family.

This chain is Large ribosomal subunit protein bL27, found in Bartonella bacilliformis (strain ATCC 35685 / KC583 / Herrer 020/F12,63).